The following is a 2292-amino-acid chain: Protein Ycf2 (2292 aa).

An ATP-binding site is contributed by 1640–1647 (GSIGIGRS).

The protein belongs to the Ycf2 family.

The protein resides in the plastid. It is found in the chloroplast stroma. Probable ATPase of unknown function. Its presence in a non-photosynthetic plant (Epifagus virginiana) and experiments in tobacco indicate that it has an essential function which is probably not related to photosynthesis. This Liriodendron tulipifera (Tuliptree) protein is Protein Ycf2.